Reading from the N-terminus, the 487-residue chain is Serralysin (487 aa).

Residues 1 to 16 (MQSTKKAIEITESSLA) constitute a propeptide that is removed on maturation. Residue H192 participates in Zn(2+) binding. E193 is a catalytic residue. H196, H202, and Y232 together coordinate Zn(2+). Positions 269, 271, 273, 301, 303, 304, 306, 343, 345, 350, 352, 354, 359, 361, 363, 367, 368, 369, 370, 372, 376, 377, 378, 379, 381, 385, 386, 387, 388, 390, 399, 406, and 416 each coordinate Ca(2+). Hemolysin-type calcium-binding repeat units follow at residues 348 to 365 (IGGS…NNVL) and 366 to 383 (KGGA…ADEL).

It belongs to the peptidase M10B family. Requires Ca(2+) as cofactor. The cofactor is Zn(2+).

It localises to the secreted. It carries out the reaction Preferential cleavage of bonds with hydrophobic residues in P1'.. Has insecticidal activity against the locust M.palpalis. When administered orally to locusts at a low dose it causes them to lie on their sides exhibiting sporadic limb movements and muscular twitching, followed by full recovery. When administered at higher doses the same symptoms are observed, followed by death. The sequence is that of Serralysin from Serratia marcescens.